The chain runs to 341 residues: Putative UPF0607 protein ENSP00000383783 (341 aa).

Residues 75–101 (EVRAEEPKEATEVKDQVETQGQEDNKR) show a composition bias toward basic and acidic residues. Disordered stretches follow at residues 75–115 (EVRA…TSSL) and 216–278 (GLLM…PPPA). Residues 234-245 (SSRSSPSRAASH) show a composition bias toward low complexity.

This sequence belongs to the UPF0607 family.

In Homo sapiens (Human), this protein is Putative UPF0607 protein ENSP00000383783.